We begin with the raw amino-acid sequence, 412 residues long: P-selectin glycoprotein ligand 1 (412 aa).

Residues 1 to 17 (MPLQLLLLLILLGPGNS) form the signal peptide. Positions 18-41 (LQLWDTWADEAEKALGPLLARDRR) are excised as a propeptide. Residues 18–320 (LQLWDTWADE…APDHISVKQC (303 aa)) lie on the Extracellular side of the membrane. Residue Gln-42 is modified to Pyrrolidone carboxylic acid. A sulfotyrosine mark is found at Tyr-46, Tyr-48, and Tyr-51. The disordered stretch occupies residues 56-95 (ETEPPEMLRNSTDTTPLTGPGTPESTTVEPAARRSTGLDA). Thr-57 carries O-linked (GalNAc...) threonine glycosylation. N-linked (GlcNAc...) asparagine glycosylation is present at Asn-65. Residues 66-82 (STDTTPLTGPGTPESTT) show a composition bias toward low complexity. A glycan (N-linked (GlcNAc...) asparagine) is linked at Asn-111. A run of 12 repeats spans residues 122–131 (QTTQPAATEA), 132–141 (QTTQPVPTEA), 142–151 (QTTPLAATEA), 162–171 (QTTPLAATEA), 182–191 (QTTQPTGLEA), 192–201 (QTTAPAAMEA), 202–211 (QTTAPAAMEA), 212–221 (QTTPPAAMEA), 222–231 (QTTQTTAMEA), 232–241 (QTTAPEATEA), 242–251 (QTTQPTATEA), and 252–261 (QTTPLAAMEA). Residues 122–261 (QTTQPAATEA…QTTPLAAMEA (140 aa)) are 12 X 10 AA tandem repeats. Disordered regions lie at residues 125-146 (QPAA…TTPL) and 166-252 (LAAT…TEAQ). A glycan (N-linked (GlcNAc...) asparagine) is linked at Asn-302. The chain crosses the membrane as a helical span at residues 321–341 (LLAILILALVATIFFVCTVVL). Over 342-412 (AVRLSRKGHM…DDLTLHSFLP (71 aa)) the chain is Cytoplasmic. Positions 374–412 (EGPSATANGGLSKAKSPGLTPEPREDREGDDLTLHSFLP) are disordered. Basic and acidic residues predominate over residues 395-406 (EPREDREGDDLT). Thr-406 is modified (phosphothreonine). Ser-409 bears the Phosphoserine mark.

Homodimer; disulfide-linked. Interaction with P-, E- and L-selectins, through their lectin/EGF domains, is required for promoting recruitment and rolling of leukocytes. These interactions require sialyl Lewis X glycan modification but there is a differing dependence for tyrosine sulfations. Sulfation on Tyr-51 of PSGL1 is most important for high affinity L-selectin/SELL binding while P-selectin/SELP requires sulfation on Tyr-48. E-selectin/SELE binds with much lower affinity and requires the sLe(x) epitope, but apparently not tyrosine sulfation. Dimerization appears not to be required for P-selectin/SELP binding. Interacts with SNX20. Interacts with MSN and SYK; mediates the activation of SYK by SELPLG. Interacts with HAVCR1. As to quaternary structure, (Microbial infection) Interacts with enterovirus 71 capsid proteins. In terms of assembly, (Microbial infection) Interacts with Staphylococcus aureus proteins SSL5 and SSL11; these interactions prevent SELPLG-mediated neutrophil rolling. In terms of processing, displays complex, core-2, sialylated and fucosylated O-linked oligosaccharides, at least some of which appear to contain poly-N-acetyllactosamine with varying degrees of substitution. Mainly disialylated or neutral forms of the core-2 tetrasaccharide, Galbeta1--&gt;4GlcNAcbeta1--&gt;6(Galbeta1--&gt;3)GalNAcOH. The GlcN:GalN ratio is approximately 2:1 and the Man:Fuc ratio 3:5. Contains about 14% fucose with alpha-1,3 linkage present in two forms: One species is a disialylated, monofucosylated glycan, and the other, a monosialylated, trifucosylated glycan with a polylactosamine backbone. The fucosylated forms carry the Lewis antigen and are important for interaction with selectins and for functioning in leukocyte rolling. The modification containing the sialyl Lewis X glycan is on Thr-57. No sulfated O-glycans. Some N-glycosylation. Post-translationally, sulfation, in conjunction with the SLe(x)-containing glycan, is necessary for P- and L-selectin binding. High affinity P-selectin binding has a preferred requirement for the isomer sulfated on both Tyr-48 and Tyr-51, whereas L-selectin binding requires predominantly sulfation on Tyr-51 with sulfation on Tyr-48 playing only a minor role. These sulfations play an important role in L- and P-selectin-mediated neutrophil recruitment, and leukocyte rolling. In terms of tissue distribution, expressed on neutrophils, monocytes and most lymphocytes.

The protein localises to the membrane. Its function is as follows. An SLe(x)-type proteoglycan, which through high affinity, calcium-dependent interactions with E-, P- and L-selectins, mediates rapid rolling of leukocytes over vascular surfaces during the initial steps in inflammation. Critical for the initial leukocyte capture. Functionally, (Microbial infection) Acts as a receptor for enterovirus 71. This is P-selectin glycoprotein ligand 1 (SELPLG) from Homo sapiens (Human).